The sequence spans 290 residues: Probable porphobilinogen deaminase (290 aa).

At Cys230 the chain carries S-(dipyrrolylmethanemethyl)cysteine.

This sequence belongs to the HMBS family. It depends on dipyrromethane as a cofactor.

It catalyses the reaction 4 porphobilinogen + H2O = hydroxymethylbilane + 4 NH4(+). It functions in the pathway porphyrin-containing compound metabolism; protoporphyrin-IX biosynthesis; coproporphyrinogen-III from 5-aminolevulinate: step 2/4. In terms of biological role, tetrapolymerization of the monopyrrole PBG into the hydroxymethylbilane pre-uroporphyrinogen in several discrete steps. This chain is Probable porphobilinogen deaminase, found in Metallosphaera sedula (strain ATCC 51363 / DSM 5348 / JCM 9185 / NBRC 15509 / TH2).